The following is a 231-amino-acid chain: Small ribosomal subunit protein uS3 (231 aa).

A KH type-2 domain is found at I38–K106.

This sequence belongs to the universal ribosomal protein uS3 family. In terms of assembly, part of the 30S ribosomal subunit. Forms a tight complex with proteins S10 and S14.

Functionally, binds the lower part of the 30S subunit head. Binds mRNA in the 70S ribosome, positioning it for translation. The polypeptide is Small ribosomal subunit protein uS3 (Endomicrobium trichonymphae).